The primary structure comprises 1647 residues: Maestro heat-like repeat-containing protein family member 1 (1647 aa).

11 HEAT repeats span residues 9–47 (SPVL…RQPN), 65–103 (QTHR…SEMT), 224–262 (SEFY…ILSV), 351–389 (RGYS…RLDV), 597–635 (DVTL…TIKN), 968–1006 (FDSI…IGFM), 1131–1168 (SLAN…DKNL), 1364–1400 (KELI…AGVE), 1403–1441 (NRYA…VADE), 1490–1528 (YEQI…LMRS), and 1612–1647 (NINS…LHHY).

This sequence belongs to the MROH1 family. In terms of assembly, homooligomer.

It is found in the lysosome membrane. Functionally, lysosome fission factor. The chain is Maestro heat-like repeat-containing protein family member 1 (mroh1) from Dictyostelium discoideum (Social amoeba).